Reading from the N-terminus, the 99-residue chain is Integration host factor subunit alpha (99 aa).

Residues 49–75 (FGNFDLRDKNQRPGRNPKTGEDIPITA) form a disordered region.

This sequence belongs to the bacterial histone-like protein family. Heterodimer of an alpha and a beta chain.

This protein is one of the two subunits of integration host factor, a specific DNA-binding protein that functions in genetic recombination as well as in transcriptional and translational control. In Salmonella arizonae (strain ATCC BAA-731 / CDC346-86 / RSK2980), this protein is Integration host factor subunit alpha.